Consider the following 143-residue polypeptide: Lysozyme C (143 aa).

Residues 1-15 form the signal peptide; sequence MKIPVFLLLLALANA. In terms of domain architecture, C-type lysozyme spans 16–143; sequence KVFQRCEWAR…LSAYIAGCGL (128 aa). 4 disulfides stabilise this stretch: Cys-21–Cys-141, Cys-45–Cys-129, Cys-79–Cys-94, and Cys-90–Cys-108. Catalysis depends on residues Glu-50 and Asp-67.

It belongs to the glycosyl hydrolase 22 family. Monomer.

The protein localises to the secreted. The catalysed reaction is Hydrolysis of (1-&gt;4)-beta-linkages between N-acetylmuramic acid and N-acetyl-D-glucosamine residues in a peptidoglycan and between N-acetyl-D-glucosamine residues in chitodextrins.. Functionally, lysozymes have primarily a bacteriolytic function; those in tissues and body fluids are associated with the monocyte-macrophage system and enhance the activity of immunoagents. This is Lysozyme C from Takifugu rubripes (Japanese pufferfish).